The chain runs to 257 residues: Large ribosomal subunit protein uL3 (257 aa).

Glutamine 151 carries the post-translational modification N5-methylglutamine. Positions 218–257 are disordered; that stretch reads YPASIKSAANTNTAPADAPVETPAEEAVVDTAATDGAQES. Residues 225 to 236 show a composition bias toward low complexity; it reads AANTNTAPADAP.

The protein belongs to the universal ribosomal protein uL3 family. In terms of assembly, part of the 50S ribosomal subunit. Forms a cluster with proteins L14 and L19. In terms of processing, methylated by PrmB.

Functionally, one of the primary rRNA binding proteins, it binds directly near the 3'-end of the 23S rRNA, where it nucleates assembly of the 50S subunit. The chain is Large ribosomal subunit protein uL3 from Sphingopyxis alaskensis (strain DSM 13593 / LMG 18877 / RB2256) (Sphingomonas alaskensis).